Here is a 567-residue protein sequence, read N- to C-terminus: Maltase A2 (567 aa).

An N-terminal signal peptide occupies residues 1 to 23; sequence MPKWAHLGLAALLLISTTQEGTA. Asn30, Asn124, and Asn198 each carry an N-linked (GlcNAc...) asparagine glycan. Residue Asp226 is the Nucleophile of the active site. Glu298 serves as the catalytic Proton donor. The N-linked (GlcNAc...) asparagine glycan is linked to Asn312.

This sequence belongs to the glycosyl hydrolase 13 family.

The catalysed reaction is Hydrolysis of terminal, non-reducing (1-&gt;4)-linked alpha-D-glucose residues with release of alpha-D-glucose.. The chain is Maltase A2 (Mal-A2) from Drosophila melanogaster (Fruit fly).